Here is a 164-residue protein sequence, read N- to C-terminus: Ecotin (164 aa).

The signal sequence occupies residues methionine 1–alanine 20. A disulfide bond links cysteine 72 and cysteine 109.

Belongs to the protease inhibitor I11 (ecotin) family. As to quaternary structure, homodimer.

It is found in the periplasm. General inhibitor of pancreatic serine proteases: inhibits chymotrypsin, trypsin, elastases, factor X, kallikrein as well as a variety of other proteases. The polypeptide is Ecotin (Salmonella typhi).